The sequence spans 70 residues: MSNNMAKIAEARKTVEQLKLEVNIDRMKVSQAAAELLAFCETHAKDDPLVTPVPAAENPFRDKRLFCVLL.

Cysteine methyl ester is present on Cys-67. A lipid anchor (S-geranylgeranyl cysteine) is attached at Cys-67. Positions 68–70 are cleaved as a propeptide — removed in mature form; the sequence is VLL.

This sequence belongs to the G protein gamma family. G proteins are composed of 3 units, alpha, beta and gamma.

It is found in the cell membrane. Functionally, guanine nucleotide-binding proteins (G proteins) are involved as a modulator or transducer in various transmembrane signaling systems. The beta and gamma chains are required for the GTPase activity, for replacement of GDP by GTP, and for G protein-effector interaction. This chain is Guanine nucleotide-binding protein G(I)/G(S)/G(O) subunit gamma-8 (GNG8), found in Homo sapiens (Human).